We begin with the raw amino-acid sequence, 328 residues long: L-arabinose transport system permease protein AraH (328 aa).

10 consecutive transmembrane segments (helical) span residues 29-49, 53-73, 79-99, 104-124, 129-149, 171-191, 220-240, 249-269, 276-296, and 297-317; these read VVFA…ATFI, GLGL…FCLA, LSVA…INLT, IGVA…GFVI, INAL…AYII, FGLP…GLLL, TKII…IILA, MTSI…GVSL, ISYV…MNLL, and NISP…AVIF.

This sequence belongs to the binding-protein-dependent transport system permease family. AraH/RbsC subfamily.

The protein localises to the cell inner membrane. Part of the binding-protein-dependent transport system for L-arabinose. Probably responsible for the translocation of the substrate across the membrane. The chain is L-arabinose transport system permease protein AraH (araH) from Escherichia coli (strain K12).